A 122-amino-acid polypeptide reads, in one-letter code: Acidic phospholipase A2 Tpu-E6b (122 aa).

7 disulfides stabilise this stretch: Cys26–Cys115, Cys28–Cys44, Cys43–Cys95, Cys49–Cys122, Cys50–Cys88, Cys57–Cys81, and Cys75–Cys86. Positions 27, 29, and 31 each coordinate Ca(2+). Residue His47 is part of the active site. Asp48 lines the Ca(2+) pocket. Residue Asp89 is part of the active site.

As to quaternary structure, monomer. The cofactor is Ca(2+). In terms of tissue distribution, expressed by the venom gland.

The protein resides in the secreted. It catalyses the reaction a 1,2-diacyl-sn-glycero-3-phosphocholine + H2O = a 1-acyl-sn-glycero-3-phosphocholine + a fatty acid + H(+). Functionally, snake venom phospholipase A2 (PLA2) that weakly inhibits ADP-induced platelet aggregation when tested on platelet rich plasma from human and rabbit blood (15-25% of inhibition at 5-10 ug of enzyme). Exhibits moderate hydrolytic activities toward L-dipalmitoyl phosphatidylcholine. PLA2 catalyzes the calcium-dependent hydrolysis of the 2-acyl groups in 3-sn-phosphoglycerides. The sequence is that of Acidic phospholipase A2 Tpu-E6b from Craspedocephalus puniceus (Flat-nosed pitviper).